Reading from the N-terminus, the 347-residue chain is Quinolinate synthase (347 aa).

The iminosuccinate site is built by histidine 47 and serine 68. Residue cysteine 113 participates in [4Fe-4S] cluster binding. Iminosuccinate-binding positions include 139–141 (YAN) and serine 156. Position 200 (cysteine 200) interacts with [4Fe-4S] cluster. Iminosuccinate is bound by residues 226–228 (HPE) and threonine 243. Cysteine 297 contributes to the [4Fe-4S] cluster binding site.

The protein belongs to the quinolinate synthase family. Type 1 subfamily. Requires [4Fe-4S] cluster as cofactor.

It is found in the cytoplasm. The catalysed reaction is iminosuccinate + dihydroxyacetone phosphate = quinolinate + phosphate + 2 H2O + H(+). It participates in cofactor biosynthesis; NAD(+) biosynthesis; quinolinate from iminoaspartate: step 1/1. Catalyzes the condensation of iminoaspartate with dihydroxyacetone phosphate to form quinolinate. The chain is Quinolinate synthase from Shigella flexneri.